The following is a 612-amino-acid chain: Chaperone protein DnaK (612 aa).

Thr173 is subject to Phosphothreonine; by autocatalysis. Positions Ala576 to Lys612 are disordered. Residues Lys578–Ala588 are compositionally biased toward low complexity. Residues Asn596–Lys612 show a composition bias toward acidic residues.

The protein belongs to the heat shock protein 70 family.

In terms of biological role, acts as a chaperone. The polypeptide is Chaperone protein DnaK (Bacillus velezensis (strain DSM 23117 / BGSC 10A6 / LMG 26770 / FZB42) (Bacillus amyloliquefaciens subsp. plantarum)).